Reading from the N-terminus, the 282-residue chain is uncharacterized protein (282 aa).

The next 6 membrane-spanning stretches (helical) occupy residues 18 to 38, 40 to 60, 87 to 107, 119 to 139, 164 to 184, and 260 to 280; these read PIVLLIPVPGSSVIHDLWAGT, LLVVFGISVLLTFYPGWVTIG, LWIVLAIGFLTAALAGGTPVV, ALHFLRITALSVVLLALGAMV, IPVDEWAVALALALRAFPMLI, and VTLAITAMASGTAVAIESLIL.

The protein belongs to the CbiQ family.

The protein resides in the cell membrane. This is an uncharacterized protein from Mycobacterium tuberculosis (strain CDC 1551 / Oshkosh).